Reading from the N-terminus, the 351-residue chain is Glycerol-3-phosphate dehydrogenase 1-like protein (351 aa).

12–17 (GSGNWG) lines the NAD(+) pocket. Substrate is bound at residue Lys-122. NAD(+) is bound at residue Ala-155. Lys-206 acts as the Proton acceptor in catalysis. Positions 271, 298, and 300 each coordinate NAD(+). 271-272 (RN) contributes to the substrate binding site.

This sequence belongs to the NAD-dependent glycerol-3-phosphate dehydrogenase family. As to quaternary structure, interacts with SCN5A.

Its subcellular location is the cytoplasm. It carries out the reaction sn-glycerol 3-phosphate + NAD(+) = dihydroxyacetone phosphate + NADH + H(+). In terms of biological role, plays a role in regulating cardiac sodium current; decreased enzymatic activity with resulting increased levels of glycerol 3-phosphate activating the DPD1L-dependent SCN5A phosphorylation pathway, may ultimately lead to decreased sodium current; cardiac sodium current may also be reduced due to alterations of NAD(H) balance induced by DPD1L. This Pongo abelii (Sumatran orangutan) protein is Glycerol-3-phosphate dehydrogenase 1-like protein (GPD1L).